The primary structure comprises 90 residues: MSSGGLLLLLGLLTLWAELTPISGQDRPKFCNLAPESGRCRGHLRRIYYNPDSNKCEVFFYGGCGGNDNNFETRKKCRQTCGAPRKGRPT.

The N-terminal stretch at M1–G24 is a signal peptide. The residue at position 25 (Q25) is a Pyrrolidone carboxylic acid. In terms of domain architecture, BPTI/Kunitz inhibitor spans C31–C81. Cystine bridges form between C31–C81, C40–C64, and C56–C77. The propeptide occupies R85–T90.

This sequence belongs to the venom Kunitz-type family. In terms of tissue distribution, expressed by the venom gland.

It localises to the secreted. Its function is as follows. Serine protease inhibitor that inhibits trypsin. In Daboia siamensis (Eastern Russel's viper), this protein is Kunitz-type serine protease inhibitor C1.